The sequence spans 964 residues: Myocardin-related transcription factor A (964 aa).

A mediates interaction with SCAI and ACTB region spans residues 1-291 (MTLLEPEMLM…KQDKGAPAMD (291 aa)). One copy of the RPEL 1 repeat lies at 15-40 (SVLQLKLQQRRTREELVSQGIMPPLK). Ser-41 carries the phosphoserine modification. Residues 41–58 (SPAAFHEQRRSLERARTE) are intervening spacer sequence 1. The RPEL 2 repeat unit spans residues 59–84 (DYLKRKIRSRPERAELVRMHILEETS). The Bipartite Nuclear localization signal signature appears at 62-100 (KRKIRSRPERAELVRMHILEETSAEPSLQAKQLKLKRAR). The segment at 85 to 102 (AEPSLQAKQLKLKRARLA) is intervening spacer sequence 2. The stretch at 103–128 (DDLNEKIAQRPGPMELVEKNILPVES) is one RPEL 3 repeat. Disordered regions lie at residues 145–292 (ADSS…AMDS) and 328–371 (LPAP…RQSS). A phosphoserine mark is found at Ser-159, Ser-174, and Ser-191. Positions 186–197 (SATSISPTQVLS) are enriched in polar residues. Pro residues predominate over residues 215-224 (PPLPPAPLLP). Residues 251–266 (ASEKSQRSKKAKELKP) show a composition bias toward basic and acidic residues. The segment covering 340 to 365 (GSSAPTPSRSLSTSSSPSSGTPGPSG) has biased composition (low complexity). Phosphoserine occurs at positions 349 and 351. A Phosphothreonine modification is found at Thr-352. Ser-355 and Ser-358 each carry phosphoserine. At Thr-360 the chain carries Phosphothreonine. Ser-371 carries the post-translational modification Phosphoserine. An SAP domain is found at 385–419 (LDDMKVAELKQELKLRSLPVSGTKTELIERLRAYQ). Phosphoserine is present on residues Ser-423 and Ser-484. The interval 484–508 (STGSTPPVSPTPSERSLLSTGDENS) is disordered. Position 485 is a phosphothreonine (Thr-485). A Phosphoserine modification is found at Ser-487. Residue Thr-488 is modified to Phosphothreonine. Position 492 is a phosphoserine (Ser-492). Thr-494 bears the Phosphothreonine mark. Ser-496 carries the post-translational modification Phosphoserine. Positions 497–508 (ERSLLSTGDENS) are enriched in polar residues. 4 positions are modified to phosphoserine: Ser-520, Ser-530, Ser-544, and Ser-548. A coiled-coil region spans residues 552-600 (RAELEGLDKDQMLQEKDKQIEELTRMLQQKQQLVELLRLQLEQQKRAQQ). Phosphoserine is present on residues Ser-605, Ser-606, Ser-651, Ser-687, Ser-718, Ser-724, and Ser-728. The interval 638-673 (TTNHGDTQAPAPESPPVVVKQEAGPPEPDLAPSSQL) is disordered. Disordered stretches follow at residues 706 to 779 (NKSA…SSSQ) and 796 to 849 (ADFK…RLED). The segment covering 715–727 (PAGSPQQPLSQPG) has biased composition (low complexity). Residues 764-779 (TVTQQPKQQENGSSSQ) are compositionally biased toward polar residues. The span at 796–810 (ADFKEPPSLPGKEKS) shows a compositional bias: basic and acidic residues. At Ser-810 the chain carries Phosphoserine. Thr-822 carries the post-translational modification Phosphothreonine. Residues Ser-826 and Ser-840 each carry the phosphoserine modification. Thr-842 is subject to Phosphothreonine. Ser-892 carries the post-translational modification Phosphoserine.

Interacts with SRF, forming the SRF-MRTFA nuclear complex which binds the 5'-CArG-3' consensus motif (CArG box) on DNA via SRF. Interacts (via RPEL repeats) with globular actin (G-actin), thereby regulating its subcellular location and activity of the complex formed with SRF. Either forms a trivalent (by binding three G-actin monomers) or pentavalent (by binding five G-actin monomers) complex with G-actin. Forms a nuclear ternary complex with SCAI and SRF, leading to suppress MRTFA-induced SRF transcriptional activity. Interacts with beta-actin (ACTB); interaction with ACTB prevents interaction with SCAI. Interacts with MRTFB. In terms of processing, phosphorylation at Ser-41 by Erk inhibits binding of globular actin (G-actin), unmasking the nuclear localization signal (NLS) and promoting nuclear import. Expressed in heart, brain, spleen, lung, liver, muscle, kidney and testis.

The protein localises to the cytoplasm. The protein resides in the nucleus. Transcription coactivator that associates with the serum response factor (SRF) transcription factor to control expression of genes regulating the cytoskeleton during development, morphogenesis and cell migration. The SRF-MRTFA complex activity responds to Rho GTPase-induced changes in cellular globular actin (G-actin) concentration, thereby coupling cytoskeletal gene expression to cytoskeletal dynamics. MRTFA binds G-actin via its RPEL repeats, regulating activity of the MRTFA-SRF complex. Activity is also regulated by filamentous actin (F-actin) in the nucleus. The chain is Myocardin-related transcription factor A (Mrtfa) from Mus musculus (Mouse).